Reading from the N-terminus, the 249-residue chain is 1-(5-phosphoribosyl)-5-[(5-phosphoribosylamino)methylideneamino] imidazole-4-carboxamide isomerase (249 aa).

The Proton acceptor role is filled by aspartate 11. Aspartate 133 functions as the Proton donor in the catalytic mechanism.

The protein belongs to the HisA/HisF family.

It is found in the cytoplasm. The catalysed reaction is 1-(5-phospho-beta-D-ribosyl)-5-[(5-phospho-beta-D-ribosylamino)methylideneamino]imidazole-4-carboxamide = 5-[(5-phospho-1-deoxy-D-ribulos-1-ylimino)methylamino]-1-(5-phospho-beta-D-ribosyl)imidazole-4-carboxamide. It participates in amino-acid biosynthesis; L-histidine biosynthesis; L-histidine from 5-phospho-alpha-D-ribose 1-diphosphate: step 4/9. This is 1-(5-phosphoribosyl)-5-[(5-phosphoribosylamino)methylideneamino] imidazole-4-carboxamide isomerase from Mannheimia succiniciproducens (strain KCTC 0769BP / MBEL55E).